The primary structure comprises 97 residues: Aspartyl/glutamyl-tRNA(Asn/Gln) amidotransferase subunit C (97 aa).

It belongs to the GatC family. As to quaternary structure, heterotrimer of A, B and C subunits.

It carries out the reaction L-glutamyl-tRNA(Gln) + L-glutamine + ATP + H2O = L-glutaminyl-tRNA(Gln) + L-glutamate + ADP + phosphate + H(+). The enzyme catalyses L-aspartyl-tRNA(Asn) + L-glutamine + ATP + H2O = L-asparaginyl-tRNA(Asn) + L-glutamate + ADP + phosphate + 2 H(+). In terms of biological role, allows the formation of correctly charged Asn-tRNA(Asn) or Gln-tRNA(Gln) through the transamidation of misacylated Asp-tRNA(Asn) or Glu-tRNA(Gln) in organisms which lack either or both of asparaginyl-tRNA or glutaminyl-tRNA synthetases. The reaction takes place in the presence of glutamine and ATP through an activated phospho-Asp-tRNA(Asn) or phospho-Glu-tRNA(Gln). The sequence is that of Aspartyl/glutamyl-tRNA(Asn/Gln) amidotransferase subunit C from Synechococcus sp. (strain CC9605).